The sequence spans 214 residues: Ribosomal RNA small subunit methyltransferase G (214 aa).

S-adenosyl-L-methionine contacts are provided by residues glycine 56, phenylalanine 61, 107 to 108 (IE), and arginine 125.

The protein belongs to the methyltransferase superfamily. RNA methyltransferase RsmG family.

The protein resides in the cytoplasm. Functionally, specifically methylates the N7 position of a guanine in 16S rRNA. In Syntrophomonas wolfei subsp. wolfei (strain DSM 2245B / Goettingen), this protein is Ribosomal RNA small subunit methyltransferase G.